The following is a 333-amino-acid chain: Large ribosomal subunit protein mL39 (333 aa).

One can recognise a TGS domain in the interval 56 to 122; sequence DKIEVRYLGL…QESCTLQLLN (67 aa). A disordered region spans residues 311 to 333; sequence SKKPSPARLPNEPFEEQQQLQLS.

It belongs to the mitochondrion-specific ribosomal protein mL39 family. In terms of assembly, component of the mitochondrial ribosome large subunit (39S) which comprises a 16S rRNA and about 50 distinct proteins.

The protein localises to the mitochondrion. The protein is Large ribosomal subunit protein mL39 (mRpL39) of Drosophila melanogaster (Fruit fly).